Consider the following 231-residue polypeptide: Orotidine 5'-phosphate decarboxylase (231 aa).

Residues aspartate 12, lysine 34, 61–70 (DMKLLDIDNT), threonine 116, arginine 177, glutamine 186, glycine 206, and arginine 207 contribute to the substrate site. Residue lysine 63 is the Proton donor of the active site.

The protein belongs to the OMP decarboxylase family. Type 1 subfamily. As to quaternary structure, homodimer.

It carries out the reaction orotidine 5'-phosphate + H(+) = UMP + CO2. It functions in the pathway pyrimidine metabolism; UMP biosynthesis via de novo pathway; UMP from orotate: step 2/2. Catalyzes the decarboxylation of orotidine 5'-monophosphate (OMP) to uridine 5'-monophosphate (UMP). This Allorhizobium ampelinum (strain ATCC BAA-846 / DSM 112012 / S4) (Agrobacterium vitis (strain S4)) protein is Orotidine 5'-phosphate decarboxylase.